The sequence spans 287 residues: MTDSTLHLLKAFFLGIVEGLTEFIPVSSTGHLIVIGDWINFASSSGKVFEVVIQFGSILAVMWIFRARLWQLIRGTLTGVRQEVNFTRNLLLAFLPAAVIGAIFIKSIKQVFYHPGVVAVTLVVGGFIMLWVERRAPHTPGDAPGAADDTASDERASAHTLEQISAKQALGVGVAQCVAMIPGVSRSGATIIGGMIAGIQRKTATEFSFFLAMPTMLGAAVYDLYRNIGLLSQHDMSAIAVGFVAAFLSALVVVRAVLRFVANHTYRVFAWYRIALGLVVAAWIYAK.

7 helical membrane passes run 6 to 26 (LHLL…FIPV), 45 to 65 (SGKV…MWIF), 89 to 109 (NLLL…KSIK), 111 to 131 (VFYH…IMLW), 204 to 224 (ATEF…VYDL), 238 to 258 (AIAV…RAVL), and 266 to 286 (YRVF…WIYA).

This sequence belongs to the UppP family.

It localises to the cell inner membrane. The enzyme catalyses di-trans,octa-cis-undecaprenyl diphosphate + H2O = di-trans,octa-cis-undecaprenyl phosphate + phosphate + H(+). Catalyzes the dephosphorylation of undecaprenyl diphosphate (UPP). Confers resistance to bacitracin. The chain is Undecaprenyl-diphosphatase from Bordetella pertussis (strain Tohama I / ATCC BAA-589 / NCTC 13251).